The primary structure comprises 372 residues: Glutamate 5-kinase (372 aa).

Lys14 is an ATP binding site. Ser54, Asp141, and Asn153 together coordinate substrate. Position 173-174 (173-174 (TD)) interacts with ATP. A PUA domain is found at 280 to 358 (RGTVVIDDGA…SQIESLLGYS (79 aa)).

Belongs to the glutamate 5-kinase family.

The protein resides in the cytoplasm. It catalyses the reaction L-glutamate + ATP = L-glutamyl 5-phosphate + ADP. It participates in amino-acid biosynthesis; L-proline biosynthesis; L-glutamate 5-semialdehyde from L-glutamate: step 1/2. Functionally, catalyzes the transfer of a phosphate group to glutamate to form L-glutamate 5-phosphate. This Methylibium petroleiphilum (strain ATCC BAA-1232 / LMG 22953 / PM1) protein is Glutamate 5-kinase.